The chain runs to 274 residues: Thiamine kinase (274 aa).

It belongs to the thiamine kinase family.

It catalyses the reaction thiamine + ATP = thiamine phosphate + ADP + H(+). It functions in the pathway cofactor biosynthesis; thiamine diphosphate biosynthesis; thiamine phosphate from thiamine: step 1/1. Its function is as follows. Catalyzes the ATP-dependent phosphorylation of thiamine to thiamine phosphate. Is involved in thiamine salvage. This is Thiamine kinase from Shigella flexneri serotype 5b (strain 8401).